The chain runs to 156 residues: Small ribosomal subunit protein uS7 (156 aa).

This sequence belongs to the universal ribosomal protein uS7 family. Part of the 30S ribosomal subunit. Contacts proteins S9 and S11.

One of the primary rRNA binding proteins, it binds directly to 16S rRNA where it nucleates assembly of the head domain of the 30S subunit. Is located at the subunit interface close to the decoding center, probably blocks exit of the E-site tRNA. In Crocosphaera subtropica (strain ATCC 51142 / BH68) (Cyanothece sp. (strain ATCC 51142)), this protein is Small ribosomal subunit protein uS7.